Here is a 223-residue protein sequence, read N- to C-terminus: Deoxyribose-phosphate aldolase (223 aa).

The active-site Proton donor/acceptor is aspartate 91. Lysine 153 functions as the Schiff-base intermediate with acetaldehyde in the catalytic mechanism. The active-site Proton donor/acceptor is lysine 182.

Belongs to the DeoC/FbaB aldolase family. DeoC type 1 subfamily.

It is found in the cytoplasm. The enzyme catalyses 2-deoxy-D-ribose 5-phosphate = D-glyceraldehyde 3-phosphate + acetaldehyde. The protein operates within carbohydrate degradation; 2-deoxy-D-ribose 1-phosphate degradation; D-glyceraldehyde 3-phosphate and acetaldehyde from 2-deoxy-alpha-D-ribose 1-phosphate: step 2/2. In terms of biological role, catalyzes a reversible aldol reaction between acetaldehyde and D-glyceraldehyde 3-phosphate to generate 2-deoxy-D-ribose 5-phosphate. The sequence is that of Deoxyribose-phosphate aldolase from Streptococcus agalactiae serotype V (strain ATCC BAA-611 / 2603 V/R).